The primary structure comprises 176 residues: Ribosome maturation factor RimM (176 aa).

In terms of domain architecture, PRC barrel spans 100–173 (PEEYYDYQLI…RLRIDPPPGL (74 aa)).

Belongs to the RimM family. In terms of assembly, binds ribosomal protein uS19.

It is found in the cytoplasm. In terms of biological role, an accessory protein needed during the final step in the assembly of 30S ribosomal subunit, possibly for assembly of the head region. Essential for efficient processing of 16S rRNA. May be needed both before and after RbfA during the maturation of 16S rRNA. It has affinity for free ribosomal 30S subunits but not for 70S ribosomes. The polypeptide is Ribosome maturation factor RimM (Acidothermus cellulolyticus (strain ATCC 43068 / DSM 8971 / 11B)).